We begin with the raw amino-acid sequence, 93 residues long: Putative pterin-4-alpha-carbinolamine dehydratase (93 aa).

It belongs to the pterin-4-alpha-carbinolamine dehydratase family.

It carries out the reaction (4aS,6R)-4a-hydroxy-L-erythro-5,6,7,8-tetrahydrobiopterin = (6R)-L-erythro-6,7-dihydrobiopterin + H2O. The chain is Putative pterin-4-alpha-carbinolamine dehydratase from Nostoc sp. (strain PCC 7120 / SAG 25.82 / UTEX 2576).